A 200-amino-acid polypeptide reads, in one-letter code: uncharacterized protein (200 aa).

3 disordered regions span residues methionine 1 to threonine 27, isoleucine 42 to alanine 79, and histidine 169 to arginine 200. Basic and acidic residues predominate over residues arginine 187–arginine 200.

This is an uncharacterized protein from Shigella flexneri.